The sequence spans 462 residues: MSAGWFRRRFLPGGPLPEPRPAGPRSSPVPYHRPRFLRGSGSSPGATDASRRPDARPVRSPARGRTLPWNAGYAEVINAEKSEFNEDQAACGKLCIRRCEFGIEEDQEWLTVCPEEFLTGHYWALFDGHGGPAAAILAANTLHSCLRRQLEAVVEGMIAPQPPMHLSGRCVCPSDPQFVEEKGIQAEDLVIGALENAFQECDDVIGRELEASGQVGGCTALVAVFLQGKLYVANAGDSRAILVRRHEIRQLSSEFTPETERQRIQQLAFTYPELLAGEFTRLEFPRRLKGDDLGQKVLFRDHHMRGWSYKRVEKSDLKYPLIHGQGRQARLLGTLAVSRGLGDHQLRVLDTDIQLKPFLLSIPQVTVLDVHQLAVQEEDVVVMATDGLWDVLSNEQVALLVRSFLTGNQKDDPHRFSELAKMLIHNTQGKDNGATGEGQVSYDDVSVFVIPLHSQAQEGSGH.

Positions methionine 1–phenylalanine 10 are enriched in basic residues. Positions methionine 1 to threonine 66 are disordered. Positions glutamate 100 to leucine 452 constitute a PPM-type phosphatase domain. 2 residues coordinate Mn(2+): aspartate 127 and glycine 128.

It belongs to the PP2C family. Mg(2+) serves as cofactor. The cofactor is Mn(2+). Widely expressed with highest levels in testis and lower levels in lung, kidney and brain.

It is found in the nucleus. The catalysed reaction is O-phospho-L-seryl-[protein] + H2O = L-seryl-[protein] + phosphate. It carries out the reaction O-phospho-L-threonyl-[protein] + H2O = L-threonyl-[protein] + phosphate. This chain is Protein phosphatase 1M, found in Mus musculus (Mouse).